We begin with the raw amino-acid sequence, 150 residues long: MEIEIQTKPFGKMQISEKQILSFPEGLLGFEDYKKFALIEEEEESVFKWLQSVEEVDLAFVVIPPSLFKKEYKPLIPEQELQGIGITDLEDGLMLVIVTVPGEDPALMTANMQGPILINKKTLLGKQFISRNESHSVREKILASAAVEMD.

It belongs to the FliW family. In terms of assembly, interacts with translational regulator CsrA and flagellin(s).

The protein resides in the cytoplasm. Acts as an anti-CsrA protein, binds CsrA and prevents it from repressing translation of its target genes, one of which is flagellin. Binds to flagellin and participates in the assembly of the flagellum. This is Flagellar assembly factor FliW from Leptospira borgpetersenii serovar Hardjo-bovis (strain L550).